The chain runs to 925 residues: Alanine--tRNA ligase (925 aa).

Positions 611, 615, 714, and 718 each coordinate Zn(2+).

This sequence belongs to the class-II aminoacyl-tRNA synthetase family. The cofactor is Zn(2+).

The protein localises to the cytoplasm. It catalyses the reaction tRNA(Ala) + L-alanine + ATP = L-alanyl-tRNA(Ala) + AMP + diphosphate. In terms of biological role, catalyzes the attachment of alanine to tRNA(Ala) in a two-step reaction: alanine is first activated by ATP to form Ala-AMP and then transferred to the acceptor end of tRNA(Ala). Also edits incorrectly charged Ser-tRNA(Ala) and Gly-tRNA(Ala) via its editing domain. The sequence is that of Alanine--tRNA ligase from Methanosarcina acetivorans (strain ATCC 35395 / DSM 2834 / JCM 12185 / C2A).